The primary structure comprises 358 residues: Insulin gene enhancer protein isl-2b (358 aa).

LIM zinc-binding domains lie at 27-80 (CVGC…CKRD) and 89-143 (CAKC…RADH). Positions 191-250 (TTRVRTVLNEKQLHTLRTCYNANPRPDALMKEQLVEMTGLSPRVIRVWFQNKRCKDKKRS) form a DNA-binding region, homeobox. A compositionally biased stretch (low complexity) spans 325–335 (ESGSLGNSSGS). Residues 325-358 (ESGSLGNSSGSDVTSLSSQLPDTPNSMVPSPVET) are disordered. Over residues 336–358 (DVTSLSSQLPDTPNSMVPSPVET) the composition is skewed to polar residues.

It localises to the nucleus. In terms of biological role, binds to one of the cis-acting domain of the insulin gene enhancer. May be involved in the regional specification of the myotome and also in target recognition by the caudal primary neuron. In Danio rerio (Zebrafish), this protein is Insulin gene enhancer protein isl-2b (isl2b).